Reading from the N-terminus, the 267-residue chain is Ribosomal RNA small subunit methyltransferase A (267 aa).

S-adenosyl-L-methionine is bound by residues Asn16, Leu18, Gly43, Glu64, Asp88, and Asn109.

The protein belongs to the class I-like SAM-binding methyltransferase superfamily. rRNA adenine N(6)-methyltransferase family. RsmA subfamily.

It is found in the cytoplasm. It carries out the reaction adenosine(1518)/adenosine(1519) in 16S rRNA + 4 S-adenosyl-L-methionine = N(6)-dimethyladenosine(1518)/N(6)-dimethyladenosine(1519) in 16S rRNA + 4 S-adenosyl-L-homocysteine + 4 H(+). In terms of biological role, specifically dimethylates two adjacent adenosines (A1518 and A1519) in the loop of a conserved hairpin near the 3'-end of 16S rRNA in the 30S particle. May play a critical role in biogenesis of 30S subunits. This is Ribosomal RNA small subunit methyltransferase A from Acidithiobacillus ferrooxidans (strain ATCC 23270 / DSM 14882 / CIP 104768 / NCIMB 8455) (Ferrobacillus ferrooxidans (strain ATCC 23270)).